A 1010-amino-acid chain; its full sequence is Retinoblastoma-related protein 3 (1010 aa).

The domain A stretch occupies residues 416 to 616 (TPVSTAMTTA…EKGSSMYNSL (201 aa)). Residues 416 to 858 (TPVSTAMTTA…NEVFIPAVKS (443 aa)) form a pocket region. The spacer stretch occupies residues 617 to 727 (IVARPALSVE…PAAGGETCAE (111 aa)). Residues 728–858 (TGIGVFFSKI…NEVFIPAVKS (131 aa)) are domain B. Disordered regions lie at residues 867–889 (ASAS…FPES) and 986–1010 (GSDR…PSDS).

This sequence belongs to the retinoblastoma protein (RB) family.

The protein localises to the nucleus. Its function is as follows. Regulator of biological processes that recruits a histone deacetylase to control gene transcription. May play a role in the entry into mitosis, negatively regulating the cell proliferation. Formation of stable complexes with geminiviridae replication-associated proteins may create a cellular environment which favors viral DNA replication. In Zea mays (Maize), this protein is Retinoblastoma-related protein 3 (RBR3).